The primary structure comprises 259 residues: tRNA pseudouridine synthase A (259 aa).

Aspartate 52 functions as the Nucleophile in the catalytic mechanism. Tyrosine 111 provides a ligand contact to substrate.

This sequence belongs to the tRNA pseudouridine synthase TruA family. In terms of assembly, homodimer.

It catalyses the reaction uridine(38/39/40) in tRNA = pseudouridine(38/39/40) in tRNA. Functionally, formation of pseudouridine at positions 38, 39 and 40 in the anticodon stem and loop of transfer RNAs. The polypeptide is tRNA pseudouridine synthase A (Ruegeria sp. (strain TM1040) (Silicibacter sp.)).